Reading from the N-terminus, the 105-residue chain is MAAKIRKNDRVVVLTGKDKGKTGEVIEVLPKENRVKVRGVNLVKKHQRPTPTQQGGIVEIEAALHVSNVAHIDPKTSKPTRVGFKTLEDGRKVRVAKASGEIIDL.

The protein belongs to the universal ribosomal protein uL24 family. As to quaternary structure, part of the 50S ribosomal subunit.

Its function is as follows. One of two assembly initiator proteins, it binds directly to the 5'-end of the 23S rRNA, where it nucleates assembly of the 50S subunit. In terms of biological role, one of the proteins that surrounds the polypeptide exit tunnel on the outside of the subunit. The protein is Large ribosomal subunit protein uL24 of Rhodospirillum centenum (strain ATCC 51521 / SW).